The following is a 101-amino-acid chain: Chaperone modulatory protein CbpM (101 aa).

This sequence belongs to the CbpM family.

Functionally, interacts with CbpA and inhibits both the DnaJ-like co-chaperone activity and the DNA binding activity of CbpA. Together with CbpA, modulates the activity of the DnaK chaperone system. Does not inhibit the co-chaperone activity of DnaJ. The sequence is that of Chaperone modulatory protein CbpM from Pseudomonas putida (strain ATCC 700007 / DSM 6899 / JCM 31910 / BCRC 17059 / LMG 24140 / F1).